The sequence spans 116 residues: MDSNHSAPAIVITVINDCASLWHEVLLGIEEEGIPFLLQHHPAGDIVDSAWQAARSSPLLVGIACDRHSLVVHYKNLPASAPLFTLMHHQDSQAQRNTGNNAARLVKGIPFRDLHA.

Glu-31 is a Mg(2+) binding site.

It belongs to the DdrB/PduH family. As to quaternary structure, forms a heterotetramer PduG(2)/PduH(2). Mg(2+) is required as a cofactor.

It localises to the bacterial microcompartment. It carries out the reaction ATP + H2O = ADP + phosphate + H(+). The protein operates within polyol metabolism; 1,2-propanediol degradation. Functionally, small subunit of the propanediol dehydratase-reactivating factor (DDR), which reactivates suicidally inhibited adenosylcobalamin-dependent propanediol dehydratase (diol dehydratase, DDH) found in the bacterial microcompartment (BMC) dedicated to 1,2-propanediol (1,2-PD) degradation. Reactivates inactivated DDH in the presence of ATP, Mg(2+) and free adenosylcobalamin (AdoCbl), by mediating the exchange of the tightly bound damaged cofactor AdoCbl for a free intact one. The 1,2-PD-specific bacterial microcompartment (BMC) concentrates low levels of 1,2-PD catabolic enzymes, concentrates volatile reaction intermediates thus enhancing pathway flux and keeps the level of toxic, mutagenic propionaldehyde low. The sequence is that of Propanediol dehydratase-reactivating factor small subunit from Salmonella typhimurium (strain LT2 / SGSC1412 / ATCC 700720).